The sequence spans 736 residues: Phosphoribosylformylglycinamidine synthase subunit PurL (736 aa).

H48 is a catalytic residue. Y51 and K90 together coordinate ATP. E92 provides a ligand contact to Mg(2+). Residues 93-96 and R115 contribute to the substrate site; that span reads SHNH. H94 serves as the catalytic Proton acceptor. Mg(2+) is bound at residue D116. Q239 serves as a coordination point for substrate. D267 lines the Mg(2+) pocket. A substrate-binding site is contributed by 311–313; that stretch reads ESQ. D492 and G529 together coordinate ATP. A Mg(2+)-binding site is contributed by N530. S532 contributes to the substrate binding site.

The protein belongs to the FGAMS family. Monomer. Part of the FGAM synthase complex composed of 1 PurL, 1 PurQ and 2 PurS subunits.

The protein localises to the cytoplasm. It catalyses the reaction N(2)-formyl-N(1)-(5-phospho-beta-D-ribosyl)glycinamide + L-glutamine + ATP + H2O = 2-formamido-N(1)-(5-O-phospho-beta-D-ribosyl)acetamidine + L-glutamate + ADP + phosphate + H(+). It participates in purine metabolism; IMP biosynthesis via de novo pathway; 5-amino-1-(5-phospho-D-ribosyl)imidazole from N(2)-formyl-N(1)-(5-phospho-D-ribosyl)glycinamide: step 1/2. Its function is as follows. Part of the phosphoribosylformylglycinamidine synthase complex involved in the purines biosynthetic pathway. Catalyzes the ATP-dependent conversion of formylglycinamide ribonucleotide (FGAR) and glutamine to yield formylglycinamidine ribonucleotide (FGAM) and glutamate. The FGAM synthase complex is composed of three subunits. PurQ produces an ammonia molecule by converting glutamine to glutamate. PurL transfers the ammonia molecule to FGAR to form FGAM in an ATP-dependent manner. PurS interacts with PurQ and PurL and is thought to assist in the transfer of the ammonia molecule from PurQ to PurL. This chain is Phosphoribosylformylglycinamidine synthase subunit PurL, found in Bradyrhizobium diazoefficiens (strain JCM 10833 / BCRC 13528 / IAM 13628 / NBRC 14792 / USDA 110).